The sequence spans 75 residues: Large ribosomal subunit protein bL31 (75 aa).

It belongs to the bacterial ribosomal protein bL31 family. Type A subfamily. Part of the 50S ribosomal subunit.

Binds the 23S rRNA. The polypeptide is Large ribosomal subunit protein bL31 (Bradyrhizobium sp. (strain BTAi1 / ATCC BAA-1182)).